A 240-amino-acid polypeptide reads, in one-letter code: RING finger protein 151 (240 aa).

The RING-type zinc-finger motif lies at 20-58; it reads CSVCHGVLKRPVRLPCSHIFCKKCILRWLARQKTCPCCR. The TRAF-type zinc-finger motif lies at 101 to 156; the sequence is GHQDSCPFELMVCPNEGCMLRVPRGALDEHRQNCQHGAYHRCSLGCGATLGPVERA.

This is RING finger protein 151 (RNF151) from Bos taurus (Bovine).